A 118-amino-acid chain; its full sequence is Small ribosomal subunit protein uS12cz/uS12cy (118 aa).

This sequence belongs to the universal ribosomal protein uS12 family. Part of the 30S ribosomal subunit.

The protein localises to the plastid. It localises to the chloroplast. Functionally, with S4 and S5 plays an important role in translational accuracy. Located at the interface of the 30S and 50S subunits. This chain is Small ribosomal subunit protein uS12cz/uS12cy (rps12-A), found in Helianthus annuus (Common sunflower).